Reading from the N-terminus, the 214-residue chain is Thymidylate kinase (214 aa).

Residue 7 to 14 (GVDGAGKR) coordinates ATP. Positions 9, 39, 70, 74, 95, 100, and 103 each coordinate dTMP. Aspartate 9 is a Mg(2+) binding site. Residues 147 to 159 (GERSRGRAQRDPG) form an LID region. DTMP contacts are provided by aspartate 163 and tyrosine 165. Position 166 (glutamate 166) interacts with Mg(2+).

This sequence belongs to the thymidylate kinase family. Homodimer. It depends on Mg(2+) as a cofactor.

The enzyme catalyses dTMP + ATP = dTDP + ADP. The protein operates within pyrimidine metabolism; dTTP biosynthesis. Its function is as follows. Catalyzes the reversible phosphorylation of deoxythymidine monophosphate (dTMP) to deoxythymidine diphosphate (dTDP), using ATP as its preferred phosphoryl donor. Situated at the junction of both de novo and salvage pathways of deoxythymidine triphosphate (dTTP) synthesis, is essential for DNA synthesis and cellular growth. The protein is Thymidylate kinase (tmk) of Mycobacterium tuberculosis (strain CDC 1551 / Oshkosh).